The chain runs to 423 residues: Probable sodium/metabolite cotransporter BASS3, chloroplastic (423 aa).

A chloroplast-targeting transit peptide spans 1–45 (MAAAVAASSSSSSSSCAAVGVATASHPHRHRQARFVVSPPAPASP). 9 consecutive transmembrane segments (helical) span residues 106–126 (ALLPLVVAATAVAALGNPATF), 138–158 (LGGIMLSIGIKLSIDDFALAF), 165–187 (TIGYMAQYIVKPLMGVLIARAFG), 192–214 (FFAGFVLTCCVSGAQLSSYASFL), 231–251 (ISSVVVTPVLTGLLIGSVVPV), 254–274 (IAMAKSILQVVLVPVTLGLLL), 287–307 (PVMPFVAMLCTSLCIGSPLAI), 318–338 (FLLLLPIVTFHIAAFIVGYWI), and 380–400 (VPAACSVVIMAIFGLTLASYW).

It belongs to the bile acid:sodium symporter (BASS) (TC 2.A.28) family.

The protein localises to the membrane. It localises to the plastid. The protein resides in the chloroplast envelope. Its function is as follows. May function as sodium-coupled metabolite transporter across the chloroplast envelope. The chain is Probable sodium/metabolite cotransporter BASS3, chloroplastic (BASS3) from Oryza sativa subsp. japonica (Rice).